Consider the following 615-residue polypeptide: Glutamine--fructose-6-phosphate aminotransferase [isomerizing] (615 aa).

The Nucleophile; for GATase activity role is filled by Cys2. Residues 2–220 (CGIVGYVGPQ…QDQVVELRRD (219 aa)) enclose the Glutamine amidotransferase type-2 domain. SIS domains lie at 287–427 (IPPG…VRGT) and 460–605 (LARS…VDQP). Residue Lys610 is the For Fru-6P isomerization activity of the active site.

In terms of assembly, homodimer.

The protein localises to the cytoplasm. The enzyme catalyses D-fructose 6-phosphate + L-glutamine = D-glucosamine 6-phosphate + L-glutamate. Catalyzes the first step in hexosamine metabolism, converting fructose-6P into glucosamine-6P using glutamine as a nitrogen source. The sequence is that of Glutamine--fructose-6-phosphate aminotransferase [isomerizing] from Streptomyces coelicolor (strain ATCC BAA-471 / A3(2) / M145).